A 201-amino-acid chain; its full sequence is Small ribosomal subunit protein uS5 (201 aa).

The interval 1 to 28 (MAGPQRRGSGAGGGERRDRKGRDGGAGA) is disordered. A compositionally biased stretch (basic and acidic residues) spans 14-23 (GERRDRKGRD). Positions 34 to 97 (YVERVVAINR…EEAKKHFFKV (64 aa)) constitute an S5 DRBM domain.

The protein belongs to the universal ribosomal protein uS5 family. As to quaternary structure, part of the 30S ribosomal subunit. Contacts proteins S4 and S8.

Its function is as follows. With S4 and S12 plays an important role in translational accuracy. Functionally, located at the back of the 30S subunit body where it stabilizes the conformation of the head with respect to the body. The protein is Small ribosomal subunit protein uS5 of Streptomyces coelicolor (strain ATCC BAA-471 / A3(2) / M145).